A 469-amino-acid polypeptide reads, in one-letter code: tRNA-2-methylthio-N(6)-dimethylallyladenosine synthase (469 aa).

The region spanning 22–142 (RKVFIKTYGC…LPEALRRAKE (121 aa)) is the MTTase N-terminal domain. [4Fe-4S] cluster-binding residues include Cys31, Cys67, Cys105, Cys183, Cys187, and Cys190. One can recognise a Radical SAM core domain in the interval 169–401 (RARGVTAFLT…QALLLKQQQE (233 aa)). The region spanning 404-466 (ESCIGKEIDL…TNSLFAERAE (63 aa)) is the TRAM domain.

Belongs to the methylthiotransferase family. MiaB subfamily. Monomer. [4Fe-4S] cluster is required as a cofactor.

It localises to the cytoplasm. The catalysed reaction is N(6)-dimethylallyladenosine(37) in tRNA + (sulfur carrier)-SH + AH2 + 2 S-adenosyl-L-methionine = 2-methylsulfanyl-N(6)-dimethylallyladenosine(37) in tRNA + (sulfur carrier)-H + 5'-deoxyadenosine + L-methionine + A + S-adenosyl-L-homocysteine + 2 H(+). In terms of biological role, catalyzes the methylthiolation of N6-(dimethylallyl)adenosine (i(6)A), leading to the formation of 2-methylthio-N6-(dimethylallyl)adenosine (ms(2)i(6)A) at position 37 in tRNAs that read codons beginning with uridine. The protein is tRNA-2-methylthio-N(6)-dimethylallyladenosine synthase of Rhizobium etli (strain ATCC 51251 / DSM 11541 / JCM 21823 / NBRC 15573 / CFN 42).